The primary structure comprises 58 residues: Large ribosomal subunit protein bL32c (58 aa).

2 disordered regions span residues 1–21 (MAVPKKRTPKSKTRSRKSQWM) and 34–58 (LAGRLAARQDQMQPTQMQPTQMQPN). The span at 44–58 (QMQPTQMQPTQMQPN) shows a compositional bias: low complexity.

This sequence belongs to the bacterial ribosomal protein bL32 family.

It localises to the plastid. The protein localises to the chloroplast. This is Large ribosomal subunit protein bL32c from Cyanidioschyzon merolae (strain NIES-3377 / 10D) (Unicellular red alga).